Consider the following 811-residue polypeptide: Bifunctional enzyme MurC/Ddl (811 aa).

Residues 1–450 (MNRKNHYHFI…GNALKDFEPK (450 aa)) form a UDP-N-acetylmuramate--alanine ligase region. ATP-binding positions include 111–117 (GSHGKTT) and 607–662 (LETF…SREI). The D-alanine--D-alanine ligase stretch occupies residues 451 to 811 (KLSVGVVCGG…NKQCLLTAKS (361 aa)). An ATP-grasp domain is found at 574-785 (KRLAASVGVP…FEQIVHQLII (212 aa)). 3 residues coordinate Mg(2+): D739, E752, and N754.

The protein in the N-terminal section; belongs to the MurCDEF family. In the C-terminal section; belongs to the D-alanine--D-alanine ligase family. Mg(2+) serves as cofactor. It depends on Mn(2+) as a cofactor.

The protein resides in the cytoplasm. The catalysed reaction is UDP-N-acetyl-alpha-D-muramate + L-alanine + ATP = UDP-N-acetyl-alpha-D-muramoyl-L-alanine + ADP + phosphate + H(+). It carries out the reaction 2 D-alanine + ATP = D-alanyl-D-alanine + ADP + phosphate + H(+). It functions in the pathway cell wall biogenesis; peptidoglycan biosynthesis. This is Bifunctional enzyme MurC/Ddl (murC/ddlA) from Chlamydia caviae (strain ATCC VR-813 / DSM 19441 / 03DC25 / GPIC) (Chlamydophila caviae).